The sequence spans 443 residues: Protoheme IX farnesyltransferase, mitochondrial (443 aa).

7 consecutive transmembrane segments (helical) span residues 174 to 194, 235 to 255, 257 to 277, 280 to 300, 309 to 329, 364 to 384, and 411 to 431; these read AAGF…LTSV, LAVS…TLGV, PLTG…YTPL, ISIA…VMGW, AGAF…FNAL, LLVL…FPIM, and LFFC…TCKR.

Belongs to the UbiA prenyltransferase family.

It is found in the mitochondrion membrane. The enzyme catalyses heme b + (2E,6E)-farnesyl diphosphate + H2O = Fe(II)-heme o + diphosphate. In terms of biological role, converts protoheme IX and farnesyl diphosphate to heme O. The sequence is that of Protoheme IX farnesyltransferase, mitochondrial (COX10) from Homo sapiens (Human).